The chain runs to 104 residues: NADH-quinone oxidoreductase subunit K (104 aa).

A run of 3 helical transmembrane segments spans residues Leu-7 to Leu-27, Ile-33 to Phe-53, and Leu-67 to Phe-87.

This sequence belongs to the complex I subunit 4L family. As to quaternary structure, NDH-1 is composed of 14 different subunits. Subunits NuoA, H, J, K, L, M, N constitute the membrane sector of the complex.

Its subcellular location is the cell inner membrane. The catalysed reaction is a quinone + NADH + 5 H(+)(in) = a quinol + NAD(+) + 4 H(+)(out). Its function is as follows. NDH-1 shuttles electrons from NADH, via FMN and iron-sulfur (Fe-S) centers, to quinones in the respiratory chain. The immediate electron acceptor for the enzyme in this species is believed to be ubiquinone. Couples the redox reaction to proton translocation (for every two electrons transferred, four hydrogen ions are translocated across the cytoplasmic membrane), and thus conserves the redox energy in a proton gradient. The chain is NADH-quinone oxidoreductase subunit K from Xanthobacter autotrophicus (strain ATCC BAA-1158 / Py2).